Reading from the N-terminus, the 465-residue chain is Spermidine/putrescine import ATP-binding protein PotA (465 aa).

Residues 1-18 are compositionally biased toward polar residues; it reads MTATSGARTSDARTSGAR. Residues 1-21 form a disordered region; it reads MTATSGARTSDARTSGARTSD. The region spanning 30–264 is the ABC transporter domain; sequence IELVGVAKDY…PRTRFVAGFI (235 aa). ATP is bound at residue 66–73; that stretch reads GPSGCGKS.

Belongs to the ABC transporter superfamily. Spermidine/putrescine importer (TC 3.A.1.11.1) family. As to quaternary structure, the complex is composed of two ATP-binding proteins (PotA), two transmembrane proteins (PotB and PotC) and a solute-binding protein (PotD).

It is found in the cell membrane. The catalysed reaction is ATP + H2O + polyamine-[polyamine-binding protein]Side 1 = ADP + phosphate + polyamineSide 2 + [polyamine-binding protein]Side 1.. Functionally, part of the ABC transporter complex PotABCD involved in spermidine/putrescine import. Responsible for energy coupling to the transport system. The protein is Spermidine/putrescine import ATP-binding protein PotA of Frankia alni (strain DSM 45986 / CECT 9034 / ACN14a).